The primary structure comprises 145 residues: Bacilliredoxin SAR1441 (145 aa).

Belongs to the bacilliredoxin family.

The chain is Bacilliredoxin SAR1441 from Staphylococcus aureus (strain MRSA252).